We begin with the raw amino-acid sequence, 459 residues long: Serine protease HTRA3 (459 aa).

Residues 1–23 (MQARALLPATLAILATLAVLALA) form the signal peptide. Positions 27–90 (PAAPCPARCD…ECVRGVCRCR (64 aa)) constitute an IGFBP N-terminal domain. 8 cysteine pairs are disulfide-bonded: Cys31-Cys54, Cys35-Cys56, Cys40-Cys57, Cys45-Cys60, Cys68-Cys82, Cys76-Cys87, Cys89-Cys107, and Cys96-Cys132. One can recognise a Kazal-like domain in the interval 76–134 (CGDSLECVRGVCRCRWTHTVCGTDGHTYADVCALQAASRRALQVSGTPVRQLQKGACPS). The segment at 181 to 347 (GSGFIMSEAG…IPSDRITRFL (167 aa)) is serine protease. Residues His197, Asp233, and Ser311 each act as charge relay system in the active site. The 86-residue stretch at 365-450 (IRMRTITPSL…EVRRGNDDLL (86 aa)) folds into the PDZ domain.

The protein belongs to the peptidase S1C family. Homotrimer. Interacts with MYH9. Interacts with TGFB1; the interaction inhibits TGFB-mediated signaling. Interacts with BMP4; the interaction inhibits BMP4-mediated signaling. Interacts with TGFB2 and GDF5. As to expression, highest level of isoform 1 in maternal part of the placenta, moderate level in heart, testis and ovary, low level in muscle and lung. High expression found in granulosa cells of the ovary. Expressed in bone matrix, particularly in articular chondrocytes. Very low level of isoform 2 expressed in placenta. Expressed in the bone matrix, particularly in articular chondrocytes.

The protein localises to the secreted. Its function is as follows. Serine protease that cleaves beta-casein/CSN2 as well as several extracellular matrix (ECM) proteoglycans such as decorin/DCN, biglycan/BGN and fibronectin/FN1. Inhibits signaling mediated by TGF-beta family proteins possibly indirectly by degradation of these ECM proteoglycans. May act as a tumor suppressor. Negatively regulates, in vitro, trophoblast invasion during placental development and may be involved in the development of the placenta in vivo. May also have a role in ovarian development, granulosa cell differentiation and luteinization. The chain is Serine protease HTRA3 (Htra3) from Mus musculus (Mouse).